A 157-amino-acid polypeptide reads, in one-letter code: Probable succinate transporter subunit YjjB (157 aa).

4 helical membrane-spanning segments follow: residues leucine 8–phenylalanine 28, alanine 55–isoleucine 75, valine 87–isoleucine 107, and phenylalanine 129–tryptophan 149.

It belongs to the ThrE exporter (TC 2.A.79) family. As to quaternary structure, the transporter is composed of YjjB and YjjP.

The protein localises to the cell inner membrane. Functionally, involved in succinate export with YjjP. Both proteins are required for export. This Salmonella agona (strain SL483) protein is Probable succinate transporter subunit YjjB.